A 75-amino-acid chain; its full sequence is DNA-directed RNA polymerase subunit omega (75 aa).

Belongs to the RNA polymerase subunit omega family. In cyanobacteria the RNAP catalytic core is composed of 2 alpha, 1 beta, 1 beta', 1 gamma and 1 omega subunit. When a sigma factor is associated with the core the holoenzyme is formed, which can initiate transcription.

It catalyses the reaction RNA(n) + a ribonucleoside 5'-triphosphate = RNA(n+1) + diphosphate. Functionally, promotes RNA polymerase assembly. Latches the N- and C-terminal regions of the beta' subunit thereby facilitating its interaction with the beta and alpha subunits. The chain is DNA-directed RNA polymerase subunit omega from Synechococcus sp. (strain CC9311).